The primary structure comprises 203 residues: Holliday junction branch migration complex subunit RuvA (203 aa).

Residues 1-64 form a domain I region; sequence MFAYFRGRLT…EDAFLLYGFS (64 aa). A domain II region spans residues 65–143; sequence SESERQLFRL…KMSPDGGKTI (79 aa). The flexible linker stretch occupies residues 144–150; the sequence is ASGSGGN. Residues 151-203 form a domain III region; it reads LALQIKDDALNALITLGFSKPAAQKAVTGILEGNPSLSVEEVVKSALVSIHNS.

Belongs to the RuvA family. As to quaternary structure, homotetramer. Forms an RuvA(8)-RuvB(12)-Holliday junction (HJ) complex. HJ DNA is sandwiched between 2 RuvA tetramers; dsDNA enters through RuvA and exits via RuvB. An RuvB hexamer assembles on each DNA strand where it exits the tetramer. Each RuvB hexamer is contacted by two RuvA subunits (via domain III) on 2 adjacent RuvB subunits; this complex drives branch migration. In the full resolvosome a probable DNA-RuvA(4)-RuvB(12)-RuvC(2) complex forms which resolves the HJ.

The protein localises to the cytoplasm. The RuvA-RuvB-RuvC complex processes Holliday junction (HJ) DNA during genetic recombination and DNA repair, while the RuvA-RuvB complex plays an important role in the rescue of blocked DNA replication forks via replication fork reversal (RFR). RuvA specifically binds to HJ cruciform DNA, conferring on it an open structure. The RuvB hexamer acts as an ATP-dependent pump, pulling dsDNA into and through the RuvAB complex. HJ branch migration allows RuvC to scan DNA until it finds its consensus sequence, where it cleaves and resolves the cruciform DNA. In Chlorobium limicola (strain DSM 245 / NBRC 103803 / 6330), this protein is Holliday junction branch migration complex subunit RuvA.